Consider the following 316-residue polypeptide: uncharacterized protein (316 aa).

It belongs to the chlamydial CPn_0441/CT_007/TC_0275 family.

This is an uncharacterized protein from Chlamydia muridarum (strain MoPn / Nigg).